Consider the following 519-residue polypeptide: DDB1- and CUL4-associated factor 17 (519 aa).

2 helical membrane-spanning segments follow: residues 186-206 (VLLYLAVFRVLPFSLVGILEI) and 222-242 (GILIVMYSSGLVRLYSFQAII).

As to quaternary structure, interacts with DDB1, CUL4A and CUL4B. As to expression, ubiquitously expressed in the embryo, with higher expression in brain, liver and skin tissues.

The protein localises to the membrane. The protein resides in the nucleus. Its subcellular location is the nucleolus. The protein operates within protein modification; protein ubiquitination. May function as a substrate receptor for CUL4-DDB1 E3 ubiquitin-protein ligase complex. In Mus musculus (Mouse), this protein is DDB1- and CUL4-associated factor 17 (Dcaf17).